The following is a 372-amino-acid chain: Histidine protein methyltransferase 1 homolog (372 aa).

Disordered stretches follow at residues 30–55 (SKEL…QFDL) and 68–103 (NAAP…AKEH). Over residues 39–49 (QKGEERDRKCS) the composition is skewed to basic and acidic residues. Residues 70 to 87 (APSQDTDSPLSAASSSRN) show a composition bias toward polar residues. A phosphoserine mark is found at serine 72 and serine 77. A Tele-methylhistidine; by autocatalysis modification is found at histidine 154. Residues 168-172 (IWECT), glycine 195, and 216-218 (QDY) contribute to the S-adenosyl-L-methionine site. Positions 247–253 (PDVKRCR) match the Nuclear localization signal motif. S-adenosyl-L-methionine contacts are provided by residues 268–270 (GEW) and serine 293.

It belongs to the methyltransferase superfamily. METTL18 family. As to quaternary structure, interacts with GRWD1 and members of the heat shock protein 90 and 70 families; these proteins may possibly be methylation substrates for the enzyme. Monomethylated at His-154 through automethylation. Automethylation at His-154 positively regulates the methyltransferase activity toward RPL3. Probably methylated on other residues.

It localises to the cytoplasm. Its subcellular location is the cytosol. The protein resides in the nucleus. The protein localises to the nucleolus. The catalysed reaction is L-histidyl-[protein] + S-adenosyl-L-methionine = N(tele)-methyl-L-histidyl-[protein] + S-adenosyl-L-homocysteine + H(+). Functionally, protein-L-histidine N-tele-methyltransferase that specifically monomethylates RPL3, thereby regulating translation elongation. Histidine methylation of RPL3 regulates translation elongation by slowing ribosome traversal on tyrosine codons: slower elongation provides enough time for proper folding of synthesized proteins and prevents cellular aggregation of tyrosine-rich proteins. The chain is Histidine protein methyltransferase 1 homolog from Homo sapiens (Human).